The chain runs to 596 residues: Chaperone protein DnaK (596 aa).

Thr180 bears the Phosphothreonine; by autocatalysis mark.

It belongs to the heat shock protein 70 family.

Its function is as follows. Acts as a chaperone. This chain is Chaperone protein DnaK, found in Thermotoga neapolitana (strain ATCC 49049 / DSM 4359 / NBRC 107923 / NS-E).